Consider the following 140-residue polypeptide: Ribonuclease P protein subunit p20 (140 aa).

Belongs to the histone-like Alba family. In terms of assembly, component of nuclear RNase P and RNase MRP complexes. RNase P consists of a catalytic RNA moiety and 10 different protein chains; POP1, POP4, POP5, POP7, RPP14, RPP21, RPP25, RPP30, RPP38 and RPP40. Within the RNase P complex, POP1, POP7 and RPP25 form the 'finger' subcomplex, POP5, RPP14, RPP40 and homodimeric RPP30 form the 'palm' subcomplex, and RPP21, POP4 and RPP38 form the 'wrist' subcomplex. All subunits of the RNase P complex interact with the catalytic RNA. Several subunits of RNase P are also part of the RNase MRP complex. RNase MRP consists of a catalytic RNA moiety and about 8 protein subunits; POP1, POP7, RPP25, RPP30, RPP38, RPP40 and possibly also POP4 and POP5. Interacts with SMN1. POP7 forms a heterodimer with RPP25 that binds to the P3 stem loop of the catalytic RNA.

It localises to the nucleus. It is found in the nucleolus. Its subcellular location is the cytoplasm. The protein resides in the cytoplasmic granule. Its function is as follows. Component of ribonuclease P, a ribonucleoprotein complex that generates mature tRNA molecules by cleaving their 5'-ends. Also a component of the MRP ribonuclease complex, which cleaves pre-rRNA sequences. The protein is Ribonuclease P protein subunit p20 (POP7) of Homo sapiens (Human).